A 198-amino-acid polypeptide reads, in one-letter code: Small ribosomal subunit protein uS4 (198 aa).

In terms of domain architecture, S4 RNA-binding spans Thr-90 to Asn-152.

Belongs to the universal ribosomal protein uS4 family. Part of the 30S ribosomal subunit. Contacts protein S5. The interaction surface between S4 and S5 is involved in control of translational fidelity.

One of the primary rRNA binding proteins, it binds directly to 16S rRNA where it nucleates assembly of the body of the 30S subunit. Its function is as follows. With S5 and S12 plays an important role in translational accuracy. The chain is Small ribosomal subunit protein uS4 from Finegoldia magna (strain ATCC 29328 / DSM 20472 / WAL 2508) (Peptostreptococcus magnus).